The sequence spans 163 residues: Phosphopantetheine adenylyltransferase (163 aa).

Substrate is bound at residue Ser-10. ATP contacts are provided by residues Ser-10–Phe-11 and His-18. Substrate-binding residues include Lys-42, Leu-78, and Lys-92. Residues Gly-93–Arg-95, Glu-103, and His-127–Ser-133 contribute to the ATP site.

The protein belongs to the bacterial CoaD family. As to quaternary structure, homohexamer. Mg(2+) is required as a cofactor.

The protein localises to the cytoplasm. It catalyses the reaction (R)-4'-phosphopantetheine + ATP + H(+) = 3'-dephospho-CoA + diphosphate. Its pathway is cofactor biosynthesis; coenzyme A biosynthesis; CoA from (R)-pantothenate: step 4/5. Functionally, reversibly transfers an adenylyl group from ATP to 4'-phosphopantetheine, yielding dephospho-CoA (dPCoA) and pyrophosphate. The chain is Phosphopantetheine adenylyltransferase from Clavibacter michiganensis subsp. michiganensis (strain NCPPB 382).